A 273-amino-acid chain; its full sequence is Thymidylate synthase (273 aa).

Arginine 31 provides a ligand contact to dUMP. Histidine 61 contacts (6R)-5,10-methylene-5,6,7,8-tetrahydrofolate. Position 136-137 (136-137) interacts with dUMP; it reads RR. The Nucleophile role is filled by cysteine 156. Residues 176-179, asparagine 187, and 217-219 contribute to the dUMP site; these read RSAD and HIY. Aspartate 179 provides a ligand contact to (6R)-5,10-methylene-5,6,7,8-tetrahydrofolate. Alanine 272 is a (6R)-5,10-methylene-5,6,7,8-tetrahydrofolate binding site.

It belongs to the thymidylate synthase family. Bacterial-type ThyA subfamily. In terms of assembly, homodimer.

It localises to the cytoplasm. The catalysed reaction is dUMP + (6R)-5,10-methylene-5,6,7,8-tetrahydrofolate = 7,8-dihydrofolate + dTMP. Its pathway is pyrimidine metabolism; dTTP biosynthesis. Functionally, catalyzes the reductive methylation of 2'-deoxyuridine-5'-monophosphate (dUMP) to 2'-deoxythymidine-5'-monophosphate (dTMP) while utilizing 5,10-methylenetetrahydrofolate (mTHF) as the methyl donor and reductant in the reaction, yielding dihydrofolate (DHF) as a by-product. This enzymatic reaction provides an intracellular de novo source of dTMP, an essential precursor for DNA biosynthesis. This is Thymidylate synthase from Corynebacterium jeikeium (strain K411).